A 1345-amino-acid polypeptide reads, in one-letter code: Mediator of RNA polymerase II transcription subunit 13 (1345 aa).

2 disordered regions span residues Lys363–Pro387 and Phe402–Gly537. Over residues Ser364–Ser375 the composition is skewed to low complexity. The span at Pro406–Leu415 shows a compositional bias: polar residues. Acidic residues predominate over residues Leu469–Leu482. Residues Ser486–Gly501 are compositionally biased toward polar residues.

This sequence belongs to the Mediator complex subunit 13 family. Component of the SRB8-11 complex, which itself associates with the Mediator complex.

The protein localises to the nucleus. Its function is as follows. Component of the SRB8-11 complex. The SRB8-11 complex is a regulatory module of the Mediator complex which is itself involved in regulation of basal and activated RNA polymerase II-dependent transcription. The SRB8-11 complex may be involved in the transcriptional repression of a subset of genes regulated by Mediator. It may inhibit the association of the Mediator complex with RNA polymerase II to form the holoenzyme complex. This Candida glabrata (strain ATCC 2001 / BCRC 20586 / JCM 3761 / NBRC 0622 / NRRL Y-65 / CBS 138) (Yeast) protein is Mediator of RNA polymerase II transcription subunit 13 (SSN2).